A 214-amino-acid polypeptide reads, in one-letter code: tRNA (guanine-N(7)-)-methyltransferase (214 aa).

Residues Glu44, Asp69, Asp96, and Asp118 each contribute to the S-adenosyl-L-methionine site. Asp118 is a catalytic residue. Position 122 (Lys122) interacts with substrate. The interaction with RNA stretch occupies residues 124–129 (KHEKRR). Substrate is bound by residues Asp154 and 191 to 194 (TEYE).

This sequence belongs to the class I-like SAM-binding methyltransferase superfamily. TrmB family.

It catalyses the reaction guanosine(46) in tRNA + S-adenosyl-L-methionine = N(7)-methylguanosine(46) in tRNA + S-adenosyl-L-homocysteine. Its pathway is tRNA modification; N(7)-methylguanine-tRNA biosynthesis. Its function is as follows. Catalyzes the formation of N(7)-methylguanine at position 46 (m7G46) in tRNA. The polypeptide is tRNA (guanine-N(7)-)-methyltransferase (Enterococcus faecalis (strain ATCC 700802 / V583)).